The following is a 555-amino-acid chain: GPI-anchor transamidase component PIGS (555 aa).

The Cytoplasmic portion of the chain corresponds to 2 to 18 (ATAGAAATDLEVVRGKR). Residues R15 and R18 each contribute to the a cardiolipin site. A helical transmembrane segment spans residues 19 to 39 (AALFFAAVAILLGLPLWWKTT). Residues 40–517 (ETYRAPLPYS…LHLLYFPDDQ (478 aa)) are Lumenal-facing. 2 N-linked (GlcNAc...) asparagine glycosylation sites follow: N267 and N370. A helical membrane pass occupies residues 518–532 (KFAIYIPLFLPMAVP). Residues 533-555 (ILLSLVKIFLETHKSWKKPEKID) lie on the Cytoplasmic side of the membrane.

Belongs to the PIGS family. As to quaternary structure, heteropentamer. Part of the GPI-anchor transamidase complex, consisting of PIGK, PIGT, PIGS, PIGU and GAA1.

It is found in the endoplasmic reticulum membrane. It participates in glycolipid biosynthesis; glycosylphosphatidylinositol-anchor biosynthesis. Its function is as follows. Component of the glycosylphosphatidylinositol-anchor (GPI-anchor) transamidase (GPI-T) complex that catalyzes the formation of the linkage between a proprotein and a GPI-anchor and participates in GPI anchored protein biosynthesis. The polypeptide is GPI-anchor transamidase component PIGS (Rattus norvegicus (Rat)).